Consider the following 197-residue polypeptide: MLIGIYIAALLLGYLFGSIPFGLILTKIAGTEDLRSIGSGNIGATNVLRTGRKGLAAATLLLDALKGTAAVIIASSFGGAEAAMLAALGAFLGHLFPVWLKFKGGKGVAVYIGVLIGLFWPGAIVFCLLWLATAVTARYSSLSALVAAFITPIFLWWFGHPALASLFAVLTLLLFWMHRENIKRLQAGTESKIGEKK.

A run of 5 helical transmembrane segments spans residues 5–25 (IYIA…GLIL), 54–74 (GLAA…VIIA), 80–100 (AEAA…PVWL), 112–132 (IGVL…LWLA), and 153–173 (IFLW…LTLL).

The protein belongs to the PlsY family. As to quaternary structure, probably interacts with PlsX.

It is found in the cell inner membrane. The enzyme catalyses an acyl phosphate + sn-glycerol 3-phosphate = a 1-acyl-sn-glycero-3-phosphate + phosphate. It participates in lipid metabolism; phospholipid metabolism. Catalyzes the transfer of an acyl group from acyl-phosphate (acyl-PO(4)) to glycerol-3-phosphate (G3P) to form lysophosphatidic acid (LPA). This enzyme utilizes acyl-phosphate as fatty acyl donor, but not acyl-CoA or acyl-ACP. The protein is Glycerol-3-phosphate acyltransferase of Rhodopseudomonas palustris (strain HaA2).